We begin with the raw amino-acid sequence, 504 residues long: Cytochrome P450 71B7 (504 aa).

The helical transmembrane segment at 1 to 21 threads the bilayer; it reads MSILLCFLCLLPVFLVSLSIL. A Glycyl lysine isopeptide (Lys-Gly) (interchain with G-Cter in ubiquitin) cross-link involves residue lysine 82. Position 446 (cysteine 446) interacts with heme.

This sequence belongs to the cytochrome P450 family. Heme serves as cofactor. Highly expressed in rosette leaves. Also expressed in roots, leaves, flowers, and siliques.

It localises to the membrane. This chain is Cytochrome P450 71B7 (CYP71B7), found in Arabidopsis thaliana (Mouse-ear cress).